The primary structure comprises 539 residues: Netrin-G1 (539 aa).

Positions 1-18 (MYLSRFLSIHALWVTVSS) are cleaved as a signal peptide. 3 disulfides stabilise this stretch: cysteine 33-cysteine 50, cysteine 72-cysteine 92, and cysteine 80-cysteine 88. The Laminin N-terminal domain occupies 46-296 (DYTACQPEST…AISDIKVRGR (251 aa)). The NGL discriminant loop I stretch occupies residues 80-91 (CAMGNPYMCNNE). N-linked (GlcNAc...) asparagine glycosylation is present at asparagine 133. Cysteine 182 and cysteine 206 are joined by a disulfide. Residues 208 to 214 (EEYSTGY) form an NGL discriminant loop II region. Residues 273–275 (EIF) are NGL discriminant loop III. Cystine bridges form between cysteine 297/cysteine 306, cysteine 299/cysteine 315, cysteine 317/cysteine 326, cysteine 329/cysteine 354, cysteine 364/cysteine 373, cysteine 366/cysteine 384, cysteine 387/cysteine 396, cysteine 399/cysteine 417, cysteine 420/cysteine 432, cysteine 422/cysteine 438, cysteine 440/cysteine 449, cysteine 452/cysteine 462, and cysteine 488/cysteine 497. Laminin EGF-like domains lie at 297–356 (CKCN…TCIP), 364–419 (CECF…VCIE), and 420–469 (CYCN…VCDN). Asparagine 320 carries an N-linked (GlcNAc...) asparagine glycan. An N-linked (GlcNAc...) asparagine glycan is attached at asparagine 406. Asparagine 433 carries N-linked (GlcNAc...) asparagine glycosylation. A lipid anchor (GPI-anchor amidated serine) is attached at serine 510. The propeptide at 511-539 (ESGQGAPPRGSPALLLLTMLLGTAGPLVF) is removed in mature form.

Post-translationally, N-glycosylated. Expression is restricted primarily to neurons of the CNS, particularly in the dorsal thalamus, olfactory bulb and inferior colliculus. Isoform 1A and isoform 1D are the major products in adult brain.

It is found in the cell membrane. In terms of biological role, involved in controlling patterning and neuronal circuit formation at the laminar, cellular, subcellular and synaptic levels. Promotes neurite outgrowth of both axons and dendrites. This is Netrin-G1 (Ntng1) from Mus musculus (Mouse).